The sequence spans 436 residues: tRNA-2-methylthio-N(6)-dimethylallyladenosine synthase (436 aa).

Residues 5 to 121 (RKLFIKTYGC…LPDMLERTEG (117 aa)) form the MTTase N-terminal domain. [4Fe-4S] cluster-binding residues include cysteine 14, cysteine 50, cysteine 84, cysteine 158, cysteine 162, and cysteine 165. A Radical SAM core domain is found at 144–374 (ATRGPAAFLT…TEQQRAAQMA (231 aa)). The TRAM domain maps to 373-435 (MAMVGREVGV…PNSLAGERLG (63 aa)).

Belongs to the methylthiotransferase family. MiaB subfamily. In terms of assembly, monomer. The cofactor is [4Fe-4S] cluster.

Its subcellular location is the cytoplasm. It carries out the reaction N(6)-dimethylallyladenosine(37) in tRNA + (sulfur carrier)-SH + AH2 + 2 S-adenosyl-L-methionine = 2-methylsulfanyl-N(6)-dimethylallyladenosine(37) in tRNA + (sulfur carrier)-H + 5'-deoxyadenosine + L-methionine + A + S-adenosyl-L-homocysteine + 2 H(+). Functionally, catalyzes the methylthiolation of N6-(dimethylallyl)adenosine (i(6)A), leading to the formation of 2-methylthio-N6-(dimethylallyl)adenosine (ms(2)i(6)A) at position 37 in tRNAs that read codons beginning with uridine. This is tRNA-2-methylthio-N(6)-dimethylallyladenosine synthase from Cereibacter sphaeroides (strain ATCC 17023 / DSM 158 / JCM 6121 / CCUG 31486 / LMG 2827 / NBRC 12203 / NCIMB 8253 / ATH 2.4.1.) (Rhodobacter sphaeroides).